We begin with the raw amino-acid sequence, 92 residues long: Small ribosomal subunit protein uS19c (92 aa).

Belongs to the universal ribosomal protein uS19 family.

The protein localises to the plastid. The protein resides in the chloroplast. Functionally, protein S19 forms a complex with S13 that binds strongly to the 16S ribosomal RNA. This is Small ribosomal subunit protein uS19c from Coffea arabica (Arabian coffee).